Reading from the N-terminus, the 55-residue chain is MAKKSGSGLQSSAGLMRYYEADKNAVQVQPKVVLIVGAIVGIAVLFLSAVNGFWP.

The Cytoplasmic segment spans residues 1–29 (MAKKSGSGLQSSAGLMRYYEADKNAVQVQ). A helical transmembrane segment spans residues 30 to 51 (PKVVLIVGAIVGIAVLFLSAVN). Residues 52–55 (GFWP) lie on the Extracellular side of the membrane.

It belongs to the SEC61-beta family. Component of the protein translocase complex. Heterotrimer consisting of alpha (SecY), beta (SecG) and gamma (SecE) subunits. Can form oligomers of the heterotrimer.

It is found in the cell membrane. Its function is as follows. Involved in protein export. The function of the beta subunit is unknown, but it may be involved in stabilization of the trimeric complex. The polypeptide is Preprotein translocase subunit SecG (Methanosarcina barkeri (strain Fusaro / DSM 804)).